The primary structure comprises 59 residues: MKTIKITQIKSSIGRIPDHKKTLLGLGLRHIGHSVIRQDTPSIRGMIKKISYILKIQEE.

Belongs to the universal ribosomal protein uL30 family. Part of the 50S ribosomal subunit.

The polypeptide is Large ribosomal subunit protein uL30 (Buchnera aphidicola subsp. Schizaphis graminum (strain Sg)).